Reading from the N-terminus, the 385-residue chain is Guanine nucleotide-binding protein alpha-5 subunit (385 aa).

Glycine 2 carries N-myristoyl glycine lipidation. Residue cysteine 6 is the site of S-palmitoyl cysteine attachment. A G-alpha domain is found at 32–385 (RKIKMLLLGI…NKNIETLSLE (354 aa)). Residues 35–48 (KMLLLGISDSGKST) form a G1 motif region. GTP contacts are provided by residues 40–47 (GISDSGKS), 174–180 (IHMRQTT), 199–203 (DVGGQ), 298–301 (NKID), and alanine 357. Mg(2+) contacts are provided by serine 47 and threonine 180. Residues 172–180 (DLIHMRQTT) form a G2 motif region. The segment at 195-204 (IRLIDVGGQK) is G3 motif. A G4 motif region spans residues 294 to 301 (MLFLNKID). The G5 motif stretch occupies residues 355 to 360 (TQATIT).

This sequence belongs to the G-alpha family. G proteins are composed of 3 units; alpha, beta and gamma. The alpha chain contains the guanine nucleotide binding site.

In terms of biological role, guanine nucleotide-binding proteins (G proteins) are involved as modulators or transducers in various transmembrane signaling systems. This is Guanine nucleotide-binding protein alpha-5 subunit (gpa-5) from Caenorhabditis briggsae.